Consider the following 354-residue polypeptide: Protein RecA (354 aa).

67 to 74 (GPESSGKT) is an ATP binding site.

Belongs to the RecA family.

It is found in the cytoplasm. Functionally, can catalyze the hydrolysis of ATP in the presence of single-stranded DNA, the ATP-dependent uptake of single-stranded DNA by duplex DNA, and the ATP-dependent hybridization of homologous single-stranded DNAs. It interacts with LexA causing its activation and leading to its autocatalytic cleavage. The polypeptide is Protein RecA (Yersinia enterocolitica serotype O:8 / biotype 1B (strain NCTC 13174 / 8081)).